The primary structure comprises 150 residues: CCAAT/enhancer-binding protein gamma (150 aa).

Lys3 participates in a covalent cross-link: Glycyl lysine isopeptide (Lys-Gly) (interchain with G-Cter in SUMO2). The disordered stretch occupies residues 27-94 (GLQQVPQLVP…QKAQDTLQRV (68 aa)). Over residues 28–37 (LQQVPQLVPA) the composition is skewed to low complexity. The span at 56-72 (SPMDRNSDEYRQRRERN) shows a compositional bias: basic and acidic residues. Positions 62 to 125 (SDEYRQRRER…SVLKDLFLEH (64 aa)) constitute a bZIP domain. The interval 66-93 (RQRRERNNMAVKKSRLKSKQKAQDTLQR) is basic motif. Positions 97–118 (LKEENERLEAKIKLLTKELSVL) are leucine-zipper. The disordered stretch occupies residues 129-150 (LADNVQPISTETTATNSDNPGQ). A compositionally biased stretch (polar residues) spans 134-150 (QPISTETTATNSDNPGQ).

This sequence belongs to the bZIP family. C/EBP subfamily. As to quaternary structure, binds DNA as a dimer and can form stable heterodimers with CEBPA. Can form stable heterodimers with CEBPB. Interacts with ZNF638; this interaction increases transcriptional activation. In terms of tissue distribution, ubiquitous.

The protein localises to the nucleus. Its function is as follows. Transcription factor that binds to the promoter and the enhancer regions of target genes. Binds to the promoter and the enhancer of the immunoglobulin heavy chain. Binds to GPE1, a cis-acting element in the G-CSF gene promoter. Binds to the enhancer element PRE-I (positive regulatory element-I) of the IL-4 gene. Binds to the promoter and the enhancer of the alpha-1-fetoprotein gene. This chain is CCAAT/enhancer-binding protein gamma (Cebpg), found in Mus musculus (Mouse).